We begin with the raw amino-acid sequence, 72 residues long: UPF0270 protein YheU (72 aa).

This sequence belongs to the UPF0270 family.

The sequence is that of UPF0270 protein YheU from Salmonella dublin (strain CT_02021853).